A 1077-amino-acid chain; its full sequence is Mitogen-activated protein kinase kinase kinase 9 (1077 aa).

The tract at residues 1 to 40 (MESSRSLLGCLASATAAPPGDDATGAGAEEEEDEEEAAAE) is disordered. Low complexity predominate over residues 14 to 27 (ATAAPPGDDATGAG). The span at 28–38 (AEEEEDEEEAA) shows a compositional bias: acidic residues. Residues 45-109 (AALPYWTAVF…PSNYVTPRSA (65 aa)) form the SH3 domain. Residues 137-405 (LTLEEIIGIG…LTTIEESGFF (269 aa)) form the Protein kinase domain. ATP is bound by residues 143 to 151 (IGIGGFGKV) and lysine 164. The active-site Proton acceptor is the aspartate 261. A phosphothreonine; by autocatalysis mark is found at threonine 297 and threonine 298. The residue at position 301 (serine 301) is a Phosphoserine; by autocatalysis. Threonine 305 bears the Phosphothreonine; by autocatalysis mark. Leucine-zipper regions lie at residues 423-444 (IQEMFDQLRAKEKELRTWEEEL) and 458-479 (LRRREQELAEREIDILERELNI). A compositionally biased stretch (basic residues) spans 491–503 (VKKRKGKFRKSRL). Disordered regions lie at residues 491 to 511 (VKKRKGKFRKSRLKLKDGNRI), 526 to 606 (SPTM…TSGD), 646 to 713 (EDED…KRGG), 748 to 790 (LPPE…KKEE), 860 to 971 (RDPN…PRPS), and 986 to 1011 (SHARSASPANSSSTETPSNLDSCFAS). At serine 526 the chain carries Phosphoserine. Polar residues-rich tracts occupy residues 559–568 (PGESSKTWGR) and 693–709 (PVNSATSTPQLTPTNSL). Residues 755–767 (PPAREEKKRREGL) show a composition bias toward basic and acidic residues. Polar residues predominate over residues 863 to 880 (NQSLTPTHVTLTAPTQPS). Over residues 901 to 915 (GSRSPSSNGMSPSPG) the composition is skewed to low complexity. Residues 987-1011 (HARSASPANSSSTETPSNLDSCFAS) are compositionally biased toward polar residues.

Belongs to the protein kinase superfamily. STE Ser/Thr protein kinase family. MAP kinase kinase kinase subfamily. Homodimer. Mg(2+) is required as a cofactor. Autophosphorylation on serine and threonine residues within the activation loop plays a role in enzyme activation. Thr-305 is likely to be the main autophosphorylation site. Autophosphorylation also occurs on Thr-297 and Ser-301. As to expression, expressed in cochlea and utricle.

It carries out the reaction L-seryl-[protein] + ATP = O-phospho-L-seryl-[protein] + ADP + H(+). It catalyses the reaction L-threonyl-[protein] + ATP = O-phospho-L-threonyl-[protein] + ADP + H(+). Its activity is regulated as follows. Homodimerization via the leucine zipper domains is required for autophosphorylation of multiple sites in the activation loop and subsequent activation. Autophosphorylation at Thr-305 is the key step in activation of MAP3K9/MLK1 and is required for full phosphorylation. Autophosphorylation at Thr-297 and Ser-301 have been shown to be of secondary importance in the activation of MAP3K9/MLK1. Functionally, serine/threonine kinase which acts as an essential component of the MAP kinase signal transduction pathway. Plays an important role in the cascades of cellular responses evoked by changes in the environment. Once activated, acts as an upstream activator of the MKK/JNK signal transduction cascade through the phosphorylation of MAP2K4/MKK4 and MAP2K7/MKK7 which in turn activate the JNKs. The MKK/JNK signaling pathway regulates stress response via activator protein-1 (JUN) and GATA4 transcription factors. Also plays a role in mitochondrial death signaling pathway, including the release cytochrome c, leading to apoptosis. This Mus musculus (Mouse) protein is Mitogen-activated protein kinase kinase kinase 9 (Map3k9).